The primary structure comprises 243 residues: UPF0758 protein PCC7424_2073 (243 aa).

The region spanning 112 to 235 (VEINDPVSAV…HQSLRTVTDL (124 aa)) is the MPN domain. Zn(2+) is bound by residues histidine 184, histidine 186, and aspartate 197. A JAMM motif motif is present at residues 184 to 197 (HNHPSGNVAPSQED).

The protein belongs to the UPF0758 family.

This chain is UPF0758 protein PCC7424_2073, found in Gloeothece citriformis (strain PCC 7424) (Cyanothece sp. (strain PCC 7424)).